We begin with the raw amino-acid sequence, 309 residues long: Putative pyridoxal kinase C6F6.11c (309 aa).

Substrate is bound by residues S12 and Y123. Residues 182–183 (SS) and 209–221 (LIPVIPGIFRGTG) each bind ATP. D222 is a binding site for substrate.

It belongs to the pyridoxine kinase family. A divalent metal cation is required as a cofactor.

The protein resides in the cytoplasm. Its subcellular location is the nucleus. It carries out the reaction pyridoxal + ATP = pyridoxal 5'-phosphate + ADP + H(+). In terms of biological role, required for synthesis of pyridoxal-5-phosphate from vitamin B6. The protein is Putative pyridoxal kinase C6F6.11c of Schizosaccharomyces pombe (strain 972 / ATCC 24843) (Fission yeast).